A 278-amino-acid chain; its full sequence is Sulfur carrier protein FdhD (278 aa).

Cys-120 serves as the catalytic Cysteine persulfide intermediate.

It belongs to the FdhD family.

The protein resides in the cytoplasm. Its function is as follows. Required for formate dehydrogenase (FDH) activity. Acts as a sulfur carrier protein that transfers sulfur from IscS to the molybdenum cofactor prior to its insertion into FDH. This chain is Sulfur carrier protein FdhD, found in Bordetella petrii (strain ATCC BAA-461 / DSM 12804 / CCUG 43448).